The chain runs to 70 residues: Putative membrane protein insertion efficiency factor (70 aa).

The protein belongs to the UPF0161 family.

Its subcellular location is the cell membrane. Could be involved in insertion of integral membrane proteins into the membrane. The chain is Putative membrane protein insertion efficiency factor from Moorella thermoacetica (strain ATCC 39073 / JCM 9320).